The primary structure comprises 267 residues: C-type lectin domain family 12 member A (267 aa).

The Cytoplasmic portion of the chain corresponds to M1–V43. The ITIM motif signature appears at I5–L10. Position 7 is a phosphotyrosine (Y7). The helical; Signal-anchor for type II membrane protein transmembrane segment at L44 to F64 threads the bilayer. Residues Y65–R267 lie on the Extracellular side of the membrane. N-linked (GlcNAc...) asparagine glycosylation is found at N98 and N105. Intrachain disulfides connect C118/C130, C133/C144, C161/C246, and C225/C238. Positions Y140–E247 constitute a C-type lectin domain. N165 carries an N-linked (GlcNAc...) asparagine glycan.

In terms of assembly, homodimer; disulfide-linked. Interacts (when the ITIM motif is phosphorylated) with PTPN6 and PTPN11. Phosphorylated at Tyr-7 by SRC in the ITIM motif following ligand-binding, promoting recruitment of tyrosine-protein phosphatases PTPN6 and PTPN11. Mainly expressed in lymphoid tissues. Preferentially expressed in peripheral blood leukocytes; less frequent in thymus, spleen, heart, brain and lung; and undetectable in other tissues.

It is found in the cell membrane. Its function is as follows. Myeloid inhibitory C-type lectin receptor that acts as a negative regulator of myeloid cell activation. Myeloid cell inhibition is required to limit proinflammatory pathways and protect against excessive inflammation. Specifically recognizes and binds various structures, such as neutrophil extracellular traps (NETs) or monosodium urate crystals. Also acts as a pattern-recognition receptor for pathogen-associated molecules, such as plasmodium hemozoin or mycobacterial micolic acid. Ligand-binding induces phosphorylation of its ITIM motif, followed by recruitment of tyrosine-protein phosphatases PTPN6 and PTPN11, which counteract tyrosine-protein kinase SYK, thereby preventing myeloid cell activation. Acts as a pattern-recognition receptor for NETs in neutrophils: specifically recognizes DNA in NETs, leading to inhibit neutrophil activation and limit further NET formation. This regulation is essential for controlling key neutrophil responses and limit NET-mediated inflammatory conditions. Also recognizes dead cells by acting as a receptor for monosodium urate crystals, leading to down-regulate neutrophil activation. Binding to monosodium urate crystals also promotes the type I interferon response. Acts as an inhibitor of natural killer (NK) cell cytotoxicity. Also acts as an ihibitor of dendritic cell maturation in an IL10-dependent manner. This chain is C-type lectin domain family 12 member A, found in Mus musculus (Mouse).